Reading from the N-terminus, the 166-residue chain is Testis-expressed protein 51 (166 aa).

An N-terminal signal peptide occupies residues 1-15 (MLPLLIICLLPAIEG). Residues 138–154 (SLWAVSLSSALLLAIAG) form a helical membrane-spanning segment.

The protein localises to the membrane. This chain is Testis-expressed protein 51, found in Homo sapiens (Human).